Here is a 283-residue protein sequence, read N- to C-terminus: Bifunctional protein FolD (283 aa).

Residues G165–S167 and S190 each bind NADP(+).

It belongs to the tetrahydrofolate dehydrogenase/cyclohydrolase family. In terms of assembly, homodimer.

It catalyses the reaction (6R)-5,10-methylene-5,6,7,8-tetrahydrofolate + NADP(+) = (6R)-5,10-methenyltetrahydrofolate + NADPH. The enzyme catalyses (6R)-5,10-methenyltetrahydrofolate + H2O = (6R)-10-formyltetrahydrofolate + H(+). It participates in one-carbon metabolism; tetrahydrofolate interconversion. Catalyzes the oxidation of 5,10-methylenetetrahydrofolate to 5,10-methenyltetrahydrofolate and then the hydrolysis of 5,10-methenyltetrahydrofolate to 10-formyltetrahydrofolate. This chain is Bifunctional protein FolD, found in Cupriavidus pinatubonensis (strain JMP 134 / LMG 1197) (Cupriavidus necator (strain JMP 134)).